The chain runs to 396 residues: Na(+)/H(+) antiporter NhaA 1 (396 aa).

The next 12 membrane-spanning stretches (helical) occupy residues 9–29 (LHNE…AMLI), 59–79 (LLLW…GLEL), 95–115 (VLPV…YVMF), 125–145 (GWAV…ALLG), 154–174 (LFLL…IAIF), 177–197 (SDLS…LFLL), 200–220 (IGVK…VAVL), 223–243 (GVHA…KGET), 260–280 (VVGL…SLAG), 281–301 (LGLN…LLLG), 332–352 (GVAL…SLAF), and 373–393 (ILSG…FSLA).

This sequence belongs to the NhaA Na(+)/H(+) (TC 2.A.33) antiporter family.

Its subcellular location is the cell inner membrane. It carries out the reaction Na(+)(in) + 2 H(+)(out) = Na(+)(out) + 2 H(+)(in). Na(+)/H(+) antiporter that extrudes sodium in exchange for external protons. The sequence is that of Na(+)/H(+) antiporter NhaA 1 from Magnetococcus marinus (strain ATCC BAA-1437 / JCM 17883 / MC-1).